The chain runs to 291 residues: Formamidopyrimidine-DNA glycosylase (291 aa).

P2 serves as the catalytic Schiff-base intermediate with DNA. The active-site Proton donor is E3. K58 acts as the Proton donor; for beta-elimination activity in catalysis. DNA is bound by residues H100, R123, and K166. The FPG-type zinc finger occupies 257-291 (SVYGREGKECLQCGTPIIRILQSGRSSFYCSQCQK). The Proton donor; for delta-elimination activity role is filled by R281.

The protein belongs to the FPG family. In terms of assembly, monomer. It depends on Zn(2+) as a cofactor.

The catalysed reaction is Hydrolysis of DNA containing ring-opened 7-methylguanine residues, releasing 2,6-diamino-4-hydroxy-5-(N-methyl)formamidopyrimidine.. The enzyme catalyses 2'-deoxyribonucleotide-(2'-deoxyribose 5'-phosphate)-2'-deoxyribonucleotide-DNA = a 3'-end 2'-deoxyribonucleotide-(2,3-dehydro-2,3-deoxyribose 5'-phosphate)-DNA + a 5'-end 5'-phospho-2'-deoxyribonucleoside-DNA + H(+). Involved in base excision repair of DNA damaged by oxidation or by mutagenic agents. Acts as a DNA glycosylase that recognizes and removes damaged bases. Has a preference for oxidized purines, such as 7,8-dihydro-8-oxoguanine (8-oxoG). Has AP (apurinic/apyrimidinic) lyase activity and introduces nicks in the DNA strand. Cleaves the DNA backbone by beta-delta elimination to generate a single-strand break at the site of the removed base with both 3'- and 5'-phosphates. This chain is Formamidopyrimidine-DNA glycosylase, found in Bartonella tribocorum (strain CIP 105476 / IBS 506).